Here is a 119-residue protein sequence, read N- to C-terminus: Large ribosomal subunit protein uL18 (119 aa).

The disordered stretch occupies residues 1–23 (MISKPDKNKTRQRRHARVRGKIS). Residues 10 to 20 (TRQRRHARVRG) show a composition bias toward basic residues.

The protein belongs to the universal ribosomal protein uL18 family. As to quaternary structure, part of the 50S ribosomal subunit; part of the 5S rRNA/L5/L18/L25 subcomplex. Contacts the 5S and 23S rRNAs.

Its function is as follows. This is one of the proteins that bind and probably mediate the attachment of the 5S RNA into the large ribosomal subunit, where it forms part of the central protuberance. In Lacticaseibacillus casei (strain BL23) (Lactobacillus casei), this protein is Large ribosomal subunit protein uL18.